An 853-amino-acid polypeptide reads, in one-letter code: DNA mismatch repair protein MutS (853 aa).

ATP is bound at residue 614 to 621; the sequence is GPNMGGKS.

It belongs to the DNA mismatch repair MutS family.

Its function is as follows. This protein is involved in the repair of mismatches in DNA. It is possible that it carries out the mismatch recognition step. This protein has a weak ATPase activity. The sequence is that of DNA mismatch repair protein MutS from Enterobacter sp. (strain 638).